Consider the following 569-residue polypeptide: 2-succinyl-5-enolpyruvyl-6-hydroxy-3-cyclohexene-1-carboxylate synthase (569 aa).

It belongs to the TPP enzyme family. MenD subfamily. In terms of assembly, homodimer. It depends on Mg(2+) as a cofactor. The cofactor is Mn(2+). Thiamine diphosphate is required as a cofactor.

It catalyses the reaction isochorismate + 2-oxoglutarate + H(+) = 5-enolpyruvoyl-6-hydroxy-2-succinyl-cyclohex-3-ene-1-carboxylate + CO2. The protein operates within quinol/quinone metabolism; 1,4-dihydroxy-2-naphthoate biosynthesis; 1,4-dihydroxy-2-naphthoate from chorismate: step 2/7. It participates in quinol/quinone metabolism; menaquinone biosynthesis. In terms of biological role, catalyzes the thiamine diphosphate-dependent decarboxylation of 2-oxoglutarate and the subsequent addition of the resulting succinic semialdehyde-thiamine pyrophosphate anion to isochorismate to yield 2-succinyl-5-enolpyruvyl-6-hydroxy-3-cyclohexene-1-carboxylate (SEPHCHC). This Shewanella sediminis (strain HAW-EB3) protein is 2-succinyl-5-enolpyruvyl-6-hydroxy-3-cyclohexene-1-carboxylate synthase.